Here is a 341-residue protein sequence, read N- to C-terminus: Putative UPF0607 protein ENSP00000383144 (341 aa).

2 disordered regions span residues 70 to 131 (RLPK…NPRP) and 218 to 279 (LMVG…PPAK). Positions 72–101 (PKTEVRAEEPKEATEVKDQVETQEQEDNKR) are enriched in basic and acidic residues. The segment covering 108 to 127 (EAASTSRPLETQGNLTSSWY) has biased composition (polar residues). A compositionally biased stretch (basic residues) spans 243–252 (AGHRSHKRKL).

It belongs to the UPF0607 family.

The chain is Putative UPF0607 protein ENSP00000383144 from Homo sapiens (Human).